Reading from the N-terminus, the 335-residue chain is Pregnancy-specific beta-1-glycoprotein 11 (335 aa).

A signal peptide spans 1 to 34 (MGPLSAPPCTEHIKWKGLLLTALLLNFWNLPTTA). One can recognise an Ig-like V-type domain in the interval 35-144 (QVMIEAQPPK…TGYFTFTLYL (110 aa)). N-linked (GlcNAc...) asparagine glycosylation is found at Asn-61, Asn-104, and Asn-111. The short motif at 127–129 (RGD) is the Cell attachment site element. Ig-like C2-type domains follow at residues 147–234 (PKPS…VTLN) and 242–317 (PRIF…TSLT). 2 cysteine pairs are disulfide-bonded: Cys-169–Cys-217 and Cys-261–Cys-301.

The protein belongs to the immunoglobulin superfamily. CEA family.

The protein resides in the secreted. The sequence is that of Pregnancy-specific beta-1-glycoprotein 11 (PSG11) from Homo sapiens (Human).